Consider the following 3380-residue polypeptide: Apolipophorins (3380 aa).

The first 21 residues, 1-21 (MGTPPHIWFLLILAISSGGLS), serve as a signal peptide directing secretion. A Vitellogenin domain is found at 40-646 (YQKGQTYTYS…SQSSYLPRSV (607 aa)). Asn-132, Asn-649, Asn-969, Asn-2174, Asn-2851, and Asn-3177 each carry an N-linked (GlcNAc...) asparagine glycan. Residues 2815-2979 (ATAILLNSHH…NAWKVDAQCA (165 aa)) enclose the VWFD domain. Cys-2839 and Cys-2978 are disulfide-bonded.

In terms of processing, cleaved into 2 chains by furin protease. However, prevention of cleavage does not impair its function. N-glycosylated. As to expression, present in brain, hemolymph, fat body and eyes.

It localises to the secreted. Functionally, constitutes the major component of lipophorin, which mediates transport for various types of lipids in hemolymph. Acts by forming lipoprotein particles that bind lipoproteins and lipids. May be required for morphogens wingless (wg) and hedgehog (hh) function, possibly by acting as vehicles for the movement of wg and hh. This is Apolipophorins from Locusta migratoria (Migratory locust).